A 238-amino-acid chain; its full sequence is Type III pantothenate kinase (238 aa).

Residue 6 to 13 (DSGNTRIK) participates in ATP binding. Substrate is bound by residues Tyr90 and 97 to 100 (GVDR). Asp99 (proton acceptor) is an active-site residue. Residue Thr122 participates in ATP binding. Thr172 is a binding site for substrate.

It belongs to the type III pantothenate kinase family. As to quaternary structure, homodimer. NH4(+) serves as cofactor. Requires K(+) as cofactor.

The protein resides in the cytoplasm. The enzyme catalyses (R)-pantothenate + ATP = (R)-4'-phosphopantothenate + ADP + H(+). It functions in the pathway cofactor biosynthesis; coenzyme A biosynthesis; CoA from (R)-pantothenate: step 1/5. Functionally, catalyzes the phosphorylation of pantothenate (Pan), the first step in CoA biosynthesis. This chain is Type III pantothenate kinase, found in Dechloromonas aromatica (strain RCB).